The chain runs to 613 residues: Ribosome-associated molecular chaperone SSB1 (613 aa).

The segment at 1–391 (MAEGVFSGAI…ILTGSNLSDD (391 aa)) is nucleotide binding domain (NBD). ATP is bound by residues 16–18 (TTY), Lys73, 205–207 (GGT), 271–278 (ERAKRTLS), and Gly342. An inter-domain linker region spans residues 392 to 402 (TKDLLLLDVAP). The segment at 403–613 (LSLGVAMQGD…RVVTKAMATR (211 aa)) is substrate binding domain (SBD). The tract at residues 516 to 612 (SEDIEKMVSQ…KRVVTKAMAT (97 aa)) is lid domain (SBDalpha). The short motif at 574–582 (VEAALADAF) is the Nuclear export signal element.

It belongs to the heat shock protein 70 family. Ssb-type Hsp70 subfamily. Binds to ribosomes. Binds close to the ribosomal tunnel exit via contacts with both ribosomal proteins and rRNA. Directly interacts with nascent polypeptides. This interaction is dependent on the ribosome-associated complex (RAC). Interacts with SSE1. Interacts with FES1.

It is found in the cytoplasm. It catalyses the reaction ATP + H2O = ADP + phosphate + H(+). Functionally, ribosome-bound, Hsp70-type chaperone that assists in the cotranslational folding of newly synthesized proteins in the cytosol. Stimulates folding by interacting with nascent chains, binding to short, largely hydrophobic sequences exposed by unfolded proteins, thereby stabilizing longer, more slowly translated, and aggregation-prone nascent polypeptides and domains that cannot fold stably until fully synthesized. The Hsp70-protein substrate interaction depends on ATP-binding and on allosteric regulation between the NBD and the SBD. The ATP-bound state is characterized by a fast exchange rate of substrate (low affinity state), while in the ADP-bound state exchange is much slower (high affinity state). During the Hsp70 cycle, the chaperone switches between the ATP-bound state (open conformation) and the ADP-bound state (closed conformation) by major conformational rearrangements involving mainly the lid domain. Ssb cooperates with a specific Hsp40/Hsp70 co-chaperone termed the ribosome-associated complex (RAC), which stimulates the ATPase activity of the ribosome-associated pool of Ssbs and switches it to the high affinity substrate binding state. Hsp110 chaperone SSE1 and FES1 act as nucleotide exchange factors that cause substrate release. In Eremothecium gossypii (strain ATCC 10895 / CBS 109.51 / FGSC 9923 / NRRL Y-1056) (Yeast), this protein is Ribosome-associated molecular chaperone SSB1 (SSB1).